The primary structure comprises 607 residues: Dolichyl-diphosphooligosaccharide--protein glycosyltransferase subunit 1 (607 aa).

Positions 1–24 (MEVPTARLLLLLLLGAWAPAPESA) are cleaved as a signal peptide. Residues 25-434 (SPEAPLLVNE…VVHYTFNKVL (410 aa)) lie on the Lumenal side of the membrane. An N6-acetyllysine modification is found at Lys-187. Asn-299 carries N-linked (GlcNAc...) asparagine glycosylation. The helical transmembrane segment at 435–455 (MLQEPLLVVAAFYILFFTVII) threads the bilayer. The Cytoplasmic portion of the chain corresponds to 456 to 607 (YVRLDFSITK…TKIDHILDAL (152 aa)). Lys-538 is modified (N6-acetyllysine; alternate). Lys-538 is covalently cross-linked (Glycyl lysine isopeptide (Lys-Gly) (interchain with G-Cter in SUMO2); alternate).

It belongs to the OST1 family. Component of the oligosaccharyltransferase (OST) complex. OST exists in two different complex forms which contain common core subunits RPN1, RPN2, OST48, OST4, DAD1 and TMEM258, either STT3A or STT3B as catalytic subunits, and form-specific accessory subunits. STT3A complex assembly occurs through the formation of 3 subcomplexes. Subcomplex 1 contains RPN1 and TMEM258, subcomplex 2 contains the STT3A-specific subunits STT3A, DC2/OSTC, and KCP2 as well as the core subunit OST4, and subcomplex 3 contains RPN2, DAD1, and OST48. The STT3A complex can form stable complexes with the Sec61 complex or with both the Sec61 and TRAP complexes. Interacts with TMEM35A/NACHO. Ubiquitinated by the ECS(ASB11) complex. In terms of processing, ufmylated by UFL1 in response to endoplasmic reticulum stress, promoting reticulophagy of endoplasmic reticulum sheets.

The protein resides in the endoplasmic reticulum membrane. It participates in protein modification; protein glycosylation. Functionally, subunit of the oligosaccharyl transferase (OST) complex that catalyzes the initial transfer of a defined glycan (Glc(3)Man(9)GlcNAc(2) in eukaryotes) from the lipid carrier dolichol-pyrophosphate to an asparagine residue within an Asn-X-Ser/Thr consensus motif in nascent polypeptide chains, the first step in protein N-glycosylation. N-glycosylation occurs cotranslationally and the complex associates with the Sec61 complex at the channel-forming translocon complex that mediates protein translocation across the endoplasmic reticulum (ER). All subunits are required for a maximal enzyme activity. This Canis lupus familiaris (Dog) protein is Dolichyl-diphosphooligosaccharide--protein glycosyltransferase subunit 1.